The chain runs to 365 residues: Chorismate synthase (365 aa).

Arg48 lines the NADP(+) pocket. FMN-binding positions include 130–132 (RSS), 242–243 (NA), Gly290, 305–309 (KPTSS), and Arg331.

It belongs to the chorismate synthase family. In terms of assembly, homotetramer. The cofactor is FMNH2.

The catalysed reaction is 5-O-(1-carboxyvinyl)-3-phosphoshikimate = chorismate + phosphate. The protein operates within metabolic intermediate biosynthesis; chorismate biosynthesis; chorismate from D-erythrose 4-phosphate and phosphoenolpyruvate: step 7/7. Its function is as follows. Catalyzes the anti-1,4-elimination of the C-3 phosphate and the C-6 proR hydrogen from 5-enolpyruvylshikimate-3-phosphate (EPSP) to yield chorismate, which is the branch point compound that serves as the starting substrate for the three terminal pathways of aromatic amino acid biosynthesis. This reaction introduces a second double bond into the aromatic ring system. The protein is Chorismate synthase of Erythrobacter litoralis (strain HTCC2594).